Here is a 377-residue protein sequence, read N- to C-terminus: 23S rRNA (uracil(747)-C(5))-methyltransferase RlmC (377 aa).

[4Fe-4S] cluster is bound by residues Cys3, Cys11, Cys14, and Cys87. S-adenosyl-L-methionine is bound by residues Gln212, Phe241, Glu262, and Asn307. The active-site Nucleophile is the Cys334.

The protein belongs to the class I-like SAM-binding methyltransferase superfamily. RNA M5U methyltransferase family. RlmC subfamily.

The enzyme catalyses uridine(747) in 23S rRNA + S-adenosyl-L-methionine = 5-methyluridine(747) in 23S rRNA + S-adenosyl-L-homocysteine + H(+). Its function is as follows. Catalyzes the formation of 5-methyl-uridine at position 747 (m5U747) in 23S rRNA. The chain is 23S rRNA (uracil(747)-C(5))-methyltransferase RlmC from Edwardsiella ictaluri (strain 93-146).